The following is a 384-amino-acid chain: L-lactate dehydrogenase (384 aa).

The FMN hydroxy acid dehydrogenase domain occupies M1–K380. Y24 is a binding site for substrate. 2 residues coordinate FMN: S106 and Q127. Y129 is a substrate binding site. Residue T155 participates in FMN binding. Residue R164 coordinates substrate. K251 provides a ligand contact to FMN. The active-site Proton acceptor is H275. Position 278 (R278) interacts with substrate. D306–R330 lines the FMN pocket.

It belongs to the FMN-dependent alpha-hydroxy acid dehydrogenase family. Requires FMN as cofactor.

The protein resides in the cell inner membrane. It catalyses the reaction (S)-lactate + A = pyruvate + AH2. Its function is as follows. Catalyzes the conversion of L-lactate to pyruvate. Is coupled to the respiratory chain. This is L-lactate dehydrogenase from Acinetobacter baylyi (strain ATCC 33305 / BD413 / ADP1).